The primary structure comprises 461 residues: Serine--tRNA ligase (461 aa).

A disordered region spans residues 112 to 134 (EVPFGRDENDNREHHTFGEKPRF). Basic and acidic residues predominate over residues 114 to 134 (PFGRDENDNREHHTFGEKPRF). 252 to 254 (TAE) serves as a coordination point for L-serine. 283–285 (RAE) contacts ATP. E306 is an L-serine binding site. An ATP-binding site is contributed by 370–373 (EISS). Residue S406 participates in L-serine binding.

This sequence belongs to the class-II aminoacyl-tRNA synthetase family. Type-1 seryl-tRNA synthetase subfamily. As to quaternary structure, homodimer. The tRNA molecule binds across the dimer.

The protein resides in the cytoplasm. It carries out the reaction tRNA(Ser) + L-serine + ATP = L-seryl-tRNA(Ser) + AMP + diphosphate + H(+). It catalyses the reaction tRNA(Sec) + L-serine + ATP = L-seryl-tRNA(Sec) + AMP + diphosphate + H(+). The protein operates within aminoacyl-tRNA biosynthesis; selenocysteinyl-tRNA(Sec) biosynthesis; L-seryl-tRNA(Sec) from L-serine and tRNA(Sec): step 1/1. Functionally, catalyzes the attachment of serine to tRNA(Ser). Is also able to aminoacylate tRNA(Sec) with serine, to form the misacylated tRNA L-seryl-tRNA(Sec), which will be further converted into selenocysteinyl-tRNA(Sec). This is Serine--tRNA ligase from Methylocella silvestris (strain DSM 15510 / CIP 108128 / LMG 27833 / NCIMB 13906 / BL2).